Consider the following 399-residue polypeptide: MATASSSDDAGAAMSISIANSSKRPIATTKTAASIPPYATLAFGALSGFASCVLLQPFDLLKTRLQQLDHRPLSPVSNKSISKPQYASRTQKLVAITKDIVHTHGYQGLWRGTAPTVIRNVPGVALYFYSVSHLRSVASQRQIPLISVAIPSDASSNTSTLAKLSTTGNLLTGAVARVTVGFILSPVTVVKARFESSNFSAATERTLLSSMREIRAQSGFRGFFQGFTATALRDAPYAGLYLALYEACKTNLAGLSRSMDGGLGTGNWMVVSASGLLAGTLATLLTHPFDIIKTRMQTTPADTLHQIALAHDPKSTLSPSVLRDSLKPSVWGMTKHLWASSGPRALLDGLGLRCARKAASSAIGWSIFERGRSWYTEREASSSAQEAGTGTRLLDHKQV.

3 Solcar repeats span residues 35 to 137 (IPPY…LRSV), 164 to 251 (LSTT…CKTN), and 266 to 374 (GNWM…GRSW). Helical transmembrane passes span 41–66 (LAFG…TRLQ), 112–138 (GTAP…RSVA), 170–195 (LLTG…ARFE), 226–249 (GFTA…EACK), 270–296 (VVSA…KTRM), and 349–367 (GLGL…GWSI). Positions 379–399 (EASSSAQEAGTGTRLLDHKQV) are disordered.

This sequence belongs to the mitochondrial carrier (TC 2.A.29) family. SLC25A38 subfamily.

Its subcellular location is the mitochondrion inner membrane. The catalysed reaction is glycine(in) = glycine(out). In terms of biological role, mitochondrial glycine transporter that imports glycine into the mitochondrial matrix. Plays an important role in providing glycine for the first enzymatic step in heme biosynthesis, the condensation of glycine with succinyl-CoA to produce 5-aminolevulinate (ALA) in the mitochondrial matrix. This chain is Mitochondrial glycine transporter, found in Mycosarcoma maydis (Corn smut fungus).